Reading from the N-terminus, the 223-residue chain is Putative 3-methyladenine DNA glycosylase (223 aa).

This sequence belongs to the DNA glycosylase MPG family.

This is Putative 3-methyladenine DNA glycosylase from Pseudomonas savastanoi pv. phaseolicola (strain 1448A / Race 6) (Pseudomonas syringae pv. phaseolicola (strain 1448A / Race 6)).